The sequence spans 56 residues: Potassium channel toxin alpha-KTx 9.1 (56 aa).

The N-terminal stretch at 1-28 (MSRLFTLVLIVLAMNVMMAIISDPVVEA) is a signal peptide. 3 disulfides stabilise this stretch: Cys31–Cys47, Cys34–Cys52, and Cys38–Cys54.

Expressed by the venom gland.

It is found in the secreted. Its function is as follows. Blocks small conductance calcium-activated potassium channels (KCNN, SK). Weakly inhibits the Kv7.1/KCNQ1 channel (10 uM of the toxin inhibits currents by 23.3%). Low toxicity by intracerebroventricular injection into mice. This Olivierus martensii (Manchurian scorpion) protein is Potassium channel toxin alpha-KTx 9.1.